The chain runs to 675 residues: Putative methyl-accepting chemotaxis AlkN (675 aa).

2 helical membrane passes run Ile24–Ser44 and Phe303–Ile323. Residues Gln343–Gln394 enclose the HAMP domain. The 237-residue stretch at Ser399–Gln635 folds into the Methyl-accepting transducer domain.

This sequence belongs to the methyl-accepting chemotaxis (MCP) protein family.

The protein resides in the membrane. It functions in the pathway hydrocarbon metabolism; alkane degradation. Its function is as follows. Chemotactic-signal transducers respond to changes in the concentration of attractants and repellents in the environment, transduce a signal from the outside to the inside of the cell, and facilitate sensory adaptation through the variation of the level of methylation. The protein is Putative methyl-accepting chemotaxis AlkN of Alcanivorax borkumensis (strain ATCC 700651 / DSM 11573 / NCIMB 13689 / SK2).